The sequence spans 67 residues: Beta-defensin 110 (67 aa).

The first 19 residues, Met1–Ala19, serve as a signal peptide directing secretion. Intrachain disulfides connect Cys35–Cys63, Cys42–Cys56, and Cys46–Cys64.

Belongs to the beta-defensin family.

Its subcellular location is the secreted. Has antibacterial activity. This is Beta-defensin 110 (DEFB110) from Pan troglodytes (Chimpanzee).